The sequence spans 152 residues: Large ribosomal subunit protein bL9 (152 aa).

The protein belongs to the bacterial ribosomal protein bL9 family.

Its function is as follows. Binds to the 23S rRNA. The polypeptide is Large ribosomal subunit protein bL9 (Prochlorococcus marinus (strain MIT 9313)).